Reading from the N-terminus, the 452-residue chain is Transcription factor AP-2-delta (452 aa).

Position 239 is a phosphoserine; by PKA (S239). The tract at residues R280–E410 is H-S-H (helix-span-helix), dimerization. The disordered stretch occupies residues K416 to D452. Residues N429–D452 are compositionally biased toward basic and acidic residues.

It belongs to the AP-2 family. As to quaternary structure, binds DNA as a dimer. Can form homodimers or heterodimers with other AP-2 family members. Expressed in both embryonic and newborn brain.

The protein resides in the nucleus. Sequence-specific DNA-binding protein that interacts with inducible viral and cellular enhancer elements to regulate transcription of selected genes. AP-2 factors bind to the consensus sequence 5'-GCCNNNGGC-3' and activate genes involved in a large spectrum of important biological functions including proper eye, face, body wall, limb and neural tube development. They also suppress a number of genes including MCAM/MUC18, C/EBP alpha and MYC. The protein is Transcription factor AP-2-delta (Tfap2d) of Mus musculus (Mouse).